The primary structure comprises 66 residues: Toxin Os1 (66 aa).

Residues 2–66 form the LCN-type CS-alpha/beta domain; the sequence is RDGYIVQLHN…PIKWLDPKCY (65 aa). Intrachain disulfides connect Cys-12-Cys-65, Cys-16-Cys-37, Cys-22-Cys-47, and Cys-26-Cys-49.

The protein belongs to the long (4 C-C) scorpion toxin superfamily. Sodium channel inhibitor family. Alpha subfamily. Expressed by the venom gland.

Its subcellular location is the secreted. In terms of biological role, alpha toxins bind voltage-independently at site-3 of sodium channels (Nav) and inhibit the inactivation of the activated channels, thereby blocking neuronal transmission. This toxin possesses a high paralytic activity against mice. The protein is Toxin Os1 of Orthochirus scrobiculosus (Central Asian scorpion).